The chain runs to 1463 residues: DNA-directed RNA polymerase subunit beta'' (1463 aa).

Cys239, Cys312, Cys319, and Cys322 together coordinate Zn(2+). 2 disordered regions span residues 836–869 (TFTG…ETRM) and 987–1007 (TNRS…AQAR). Polar residues predominate over residues 860-869 (AANSSHETRM). The segment covering 987–996 (TNRSKTRRNA) has biased composition (basic residues). Residues 997 to 1007 (SGKTQVKAQAR) show a composition bias toward polar residues.

This sequence belongs to the RNA polymerase beta' chain family. RpoC2 subfamily. In plastids the minimal PEP RNA polymerase catalytic core is composed of four subunits: alpha, beta, beta', and beta''. When a (nuclear-encoded) sigma factor is associated with the core the holoenzyme is formed, which can initiate transcription. The cofactor is Zn(2+).

It localises to the plastid. It is found in the chloroplast. It catalyses the reaction RNA(n) + a ribonucleoside 5'-triphosphate = RNA(n+1) + diphosphate. Functionally, DNA-dependent RNA polymerase catalyzes the transcription of DNA into RNA using the four ribonucleoside triphosphates as substrates. This is DNA-directed RNA polymerase subunit beta'' from Nephroselmis olivacea (Green alga).